The primary structure comprises 503 residues: Maturase K (503 aa).

The protein belongs to the intron maturase 2 family. MatK subfamily.

The protein resides in the plastid. It is found in the chloroplast. Functionally, usually encoded in the trnK tRNA gene intron. Probably assists in splicing its own and other chloroplast group II introns. The polypeptide is Maturase K (Cercocarpus betuloides (Mountain mahogany)).